Here is a 195-residue protein sequence, read N- to C-terminus: Imidazoleglycerol-phosphate dehydratase (195 aa).

This sequence belongs to the imidazoleglycerol-phosphate dehydratase family.

The protein resides in the cytoplasm. The enzyme catalyses D-erythro-1-(imidazol-4-yl)glycerol 3-phosphate = 3-(imidazol-4-yl)-2-oxopropyl phosphate + H2O. It participates in amino-acid biosynthesis; L-histidine biosynthesis; L-histidine from 5-phospho-alpha-D-ribose 1-diphosphate: step 6/9. In Bacillus cytotoxicus (strain DSM 22905 / CIP 110041 / 391-98 / NVH 391-98), this protein is Imidazoleglycerol-phosphate dehydratase.